Consider the following 257-residue polypeptide: 14-3-3-like protein GF14-G (257 aa).

Belongs to the 14-3-3 family.

Is associated with a DNA binding complex that binds to the G box, a well-characterized cis-acting DNA regulatory element found in plant genes. The chain is 14-3-3-like protein GF14-G (GF14G) from Oryza sativa subsp. japonica (Rice).